The chain runs to 837 residues: Protein translocase subunit SecA (837 aa).

ATP contacts are provided by residues Gln85, 103–107 (GEGKT), and Asp493. Cys821, Cys823, Cys832, and His833 together coordinate Zn(2+).

Belongs to the SecA family. As to quaternary structure, monomer and homodimer. Part of the essential Sec protein translocation apparatus which comprises SecA, SecYEG and auxiliary proteins SecDF. Other proteins may also be involved. It depends on Zn(2+) as a cofactor.

It is found in the cell membrane. The protein resides in the cytoplasm. The catalysed reaction is ATP + H2O + cellular proteinSide 1 = ADP + phosphate + cellular proteinSide 2.. Part of the Sec protein translocase complex. Interacts with the SecYEG preprotein conducting channel. Has a central role in coupling the hydrolysis of ATP to the transfer of proteins into and across the cell membrane, serving as an ATP-driven molecular motor driving the stepwise translocation of polypeptide chains across the membrane. This Streptococcus pneumoniae serotype 2 (strain D39 / NCTC 7466) protein is Protein translocase subunit SecA.